Reading from the N-terminus, the 309-residue chain is MIKVYAPASIGNVSVGFDVLGAAVSPVNGALLGDCVTVRAAKSFSLRNEGQFVGKLPEKLEHNIVYQCWQLFCQHLGKQLPVEMTLEKNMPIGSGLGSSACSVVAGLMALNEFAGLPFNESQLLAMMGELEGRISGSIHYDNVAPCYLGGLQLIMEQGDIICQPVPSFDEWLWVMAYPGIKVSTAEARAILPVKYSKQDVIDHGRFLAGFIHACHTRQPALAARLMKDVVAEPYRTQLLPGFANARETAKRVGALACGISGSGPTLFSICNDIATAEEIAEWLQQHYVQNDEGFVHICRLDLAGARQIG.

91 to 101 (PIGSGLGSSAC) provides a ligand contact to ATP.

The protein belongs to the GHMP kinase family. Homoserine kinase subfamily.

The protein localises to the cytoplasm. The catalysed reaction is L-homoserine + ATP = O-phospho-L-homoserine + ADP + H(+). It participates in amino-acid biosynthesis; L-threonine biosynthesis; L-threonine from L-aspartate: step 4/5. Functionally, catalyzes the ATP-dependent phosphorylation of L-homoserine to L-homoserine phosphate. This chain is Homoserine kinase, found in Photorhabdus laumondii subsp. laumondii (strain DSM 15139 / CIP 105565 / TT01) (Photorhabdus luminescens subsp. laumondii).